The chain runs to 110 residues: MITLDWEKANGLITTVVQDATTKQVLMVAYMNQESLAKTMATGETWFWSRSRKTLWHKGATSGNIQMVKTIAVDCDADTLLVTVDPAGPACHTGHISCFYRHYPEGKDLT.

Aspartate 74 serves as a coordination point for Mg(2+). Zn(2+) is bound at residue cysteine 75. Residues aspartate 76 and aspartate 78 each contribute to the Mg(2+) site. Residues cysteine 91 and cysteine 98 each coordinate Zn(2+).

It belongs to the PRA-CH family. As to quaternary structure, homodimer. Mg(2+) serves as cofactor. Requires Zn(2+) as cofactor.

It is found in the cytoplasm. It carries out the reaction 1-(5-phospho-beta-D-ribosyl)-5'-AMP + H2O = 1-(5-phospho-beta-D-ribosyl)-5-[(5-phospho-beta-D-ribosylamino)methylideneamino]imidazole-4-carboxamide. It participates in amino-acid biosynthesis; L-histidine biosynthesis; L-histidine from 5-phospho-alpha-D-ribose 1-diphosphate: step 3/9. Its function is as follows. Catalyzes the hydrolysis of the adenine ring of phosphoribosyl-AMP. The chain is Phosphoribosyl-AMP cyclohydrolase from Lacticaseibacillus paracasei (strain ATCC 334 / BCRC 17002 / CCUG 31169 / CIP 107868 / KCTC 3260 / NRRL B-441) (Lactobacillus paracasei).